Reading from the N-terminus, the 122-residue chain is Small ribosomal subunit protein bS16 (122 aa).

This sequence belongs to the bacterial ribosomal protein bS16 family.

The protein is Small ribosomal subunit protein bS16 of Prochlorococcus marinus (strain MIT 9313).